A 556-amino-acid polypeptide reads, in one-letter code: Formate--tetrahydrofolate ligase (556 aa).

ATP is bound at residue 65 to 72 (TPAGEGKT).

It belongs to the formate--tetrahydrofolate ligase family.

The catalysed reaction is (6S)-5,6,7,8-tetrahydrofolate + formate + ATP = (6R)-10-formyltetrahydrofolate + ADP + phosphate. Its pathway is one-carbon metabolism; tetrahydrofolate interconversion. This Lachnoclostridium phytofermentans (strain ATCC 700394 / DSM 18823 / ISDg) (Clostridium phytofermentans) protein is Formate--tetrahydrofolate ligase.